The chain runs to 242 residues: MSKRRIAPLTFLRRLLLRILAALAVFWGGGIALFSVVPVPFSAVMAERQISAWLGGEFGYVAHSDWVSMADISPWMGLAVIAAEDQKFPEHWGFDVPAIEKALAHNERNESRIRGASTLSQQTAKNLFLWDGRSWVRKGLEAGLTLGIETVWSKKRILTVYLNIAEFGDGIFGVEAAAQRYFHKPASRLSVSEAALLAAVLPNPLRYKANAPSGYVRSRQAWIMRQMRQLGGESFMTRNQLN.

The chain crosses the membrane as a helical span at residues 19–39 (ILAALAVFWGGGIALFSVVPV).

This sequence belongs to the glycosyltransferase 51 family.

It is found in the cell inner membrane. It carries out the reaction [GlcNAc-(1-&gt;4)-Mur2Ac(oyl-L-Ala-gamma-D-Glu-L-Lys-D-Ala-D-Ala)](n)-di-trans,octa-cis-undecaprenyl diphosphate + beta-D-GlcNAc-(1-&gt;4)-Mur2Ac(oyl-L-Ala-gamma-D-Glu-L-Lys-D-Ala-D-Ala)-di-trans,octa-cis-undecaprenyl diphosphate = [GlcNAc-(1-&gt;4)-Mur2Ac(oyl-L-Ala-gamma-D-Glu-L-Lys-D-Ala-D-Ala)](n+1)-di-trans,octa-cis-undecaprenyl diphosphate + di-trans,octa-cis-undecaprenyl diphosphate + H(+). Its pathway is cell wall biogenesis; peptidoglycan biosynthesis. In terms of biological role, peptidoglycan polymerase that catalyzes glycan chain elongation from lipid-linked precursors. The protein is Biosynthetic peptidoglycan transglycosylase of Salmonella typhi.